Consider the following 511-residue polypeptide: Glucans biosynthesis protein G (511 aa).

The signal sequence occupies residues Met-1–Ala-22.

This sequence belongs to the OpgD/OpgG family.

Its subcellular location is the periplasm. The protein operates within glycan metabolism; osmoregulated periplasmic glucan (OPG) biosynthesis. Its function is as follows. Involved in the biosynthesis of osmoregulated periplasmic glucans (OPGs). The chain is Glucans biosynthesis protein G from Escherichia coli O81 (strain ED1a).